The chain runs to 745 residues: Meiotic driver SPOK3 (745 aa).

Positions 4 to 34 (KDRITQLLRELEEAKAREAQERCEKERLQLE) form a coiled coil. 2 disordered regions span residues 173-222 (ELTQ…DGVG) and 407-487 (LSSA…VDPQ). Positions 188-197 (TSDRSLERRQ) are enriched in basic and acidic residues. Polar residues-rich tracts occupy residues 208 to 217 (KSKYICSNRQ) and 409 to 422 (SAPS…SEYT). Residues 214–325 (SNRQPDGVGI…LLLYVDRDDW (112 aa)) are required for antidote activity. A compositionally biased stretch (basic and acidic residues) spans 466 to 482 (AKRERGPSSGGKDDGRS). The tract at residues 491–745 (QYCTQACLLG…SPMATPSHGG (255 aa)) is required for poison activity.

It localises to the cytoplasm. It is found in the nucleus. In terms of biological role, promotes unequal transmission of alleles from the parental zygote to progeny spores by acting as poison/antidote system, leading to poisoning of progeny that do not inherit the allele. May possess DNA nuclease activity that leads to spore killing, and a kinase activity that confers resistance to the nuclease activity. This chain is Meiotic driver SPOK3, found in Podospora anserina (Pleurage anserina).